Here is a 252-residue protein sequence, read N- to C-terminus: Imidazole glycerol phosphate synthase subunit HisF (252 aa).

Catalysis depends on residues Asp11 and Asp130.

The protein belongs to the HisA/HisF family. In terms of assembly, heterodimer of HisH and HisF.

The protein localises to the cytoplasm. It carries out the reaction 5-[(5-phospho-1-deoxy-D-ribulos-1-ylimino)methylamino]-1-(5-phospho-beta-D-ribosyl)imidazole-4-carboxamide + L-glutamine = D-erythro-1-(imidazol-4-yl)glycerol 3-phosphate + 5-amino-1-(5-phospho-beta-D-ribosyl)imidazole-4-carboxamide + L-glutamate + H(+). It participates in amino-acid biosynthesis; L-histidine biosynthesis; L-histidine from 5-phospho-alpha-D-ribose 1-diphosphate: step 5/9. In terms of biological role, IGPS catalyzes the conversion of PRFAR and glutamine to IGP, AICAR and glutamate. The HisF subunit catalyzes the cyclization activity that produces IGP and AICAR from PRFAR using the ammonia provided by the HisH subunit. The chain is Imidazole glycerol phosphate synthase subunit HisF from Aromatoleum aromaticum (strain DSM 19018 / LMG 30748 / EbN1) (Azoarcus sp. (strain EbN1)).